The primary structure comprises 429 residues: Serine hydroxymethyltransferase (429 aa).

(6S)-5,6,7,8-tetrahydrofolate is bound by residues leucine 127 and 131 to 133; that span reads GHL. Lysine 236 bears the N6-(pyridoxal phosphate)lysine mark. Position 252 (glutamate 252) interacts with (6S)-5,6,7,8-tetrahydrofolate.

It belongs to the SHMT family. In terms of assembly, homodimer. Pyridoxal 5'-phosphate is required as a cofactor.

It is found in the cytoplasm. It carries out the reaction (6R)-5,10-methylene-5,6,7,8-tetrahydrofolate + glycine + H2O = (6S)-5,6,7,8-tetrahydrofolate + L-serine. The protein operates within one-carbon metabolism; tetrahydrofolate interconversion. Its pathway is amino-acid biosynthesis; glycine biosynthesis; glycine from L-serine: step 1/1. In terms of biological role, catalyzes the reversible interconversion of serine and glycine with tetrahydrofolate (THF) serving as the one-carbon carrier. This reaction serves as the major source of one-carbon groups required for the biosynthesis of purines, thymidylate, methionine, and other important biomolecules. Also exhibits THF-independent aldolase activity toward beta-hydroxyamino acids, producing glycine and aldehydes, via a retro-aldol mechanism. This Rhodospirillum centenum (strain ATCC 51521 / SW) protein is Serine hydroxymethyltransferase.